The following is a 362-amino-acid chain: tRNA-specific 2-thiouridylase MnmA 1 (362 aa).

Residues 12–19 (GMSGGVDS) and Met-38 contribute to the ATP site. Cys-104 serves as the catalytic Nucleophile. The cysteines at positions 104 and 200 are disulfide-linked. Residue Gly-128 coordinates ATP. An interaction with tRNA region spans residues 150-152 (KDQ). Catalysis depends on Cys-200, which acts as the Cysteine persulfide intermediate. The interaction with tRNA stretch occupies residues 306-307 (RY).

It belongs to the MnmA/TRMU family.

It is found in the cytoplasm. It catalyses the reaction S-sulfanyl-L-cysteinyl-[protein] + uridine(34) in tRNA + AH2 + ATP = 2-thiouridine(34) in tRNA + L-cysteinyl-[protein] + A + AMP + diphosphate + H(+). Its function is as follows. Catalyzes the 2-thiolation of uridine at the wobble position (U34) of tRNA, leading to the formation of s(2)U34. The chain is tRNA-specific 2-thiouridylase MnmA 1 from Clostridium tetani (strain Massachusetts / E88).